The primary structure comprises 527 residues: Bifunctional dihydrofolate reductase-thymidylate synthase (527 aa).

The DHFR domain maps to 28-238; the sequence is PFSVVVASDE…KKYQFEKLVP (211 aa). Position 32 (Val-32) interacts with substrate. Residues Ala-34 and 40-46 each bind NADP(+); that span reads GIGDGGT. Position 54 (Asp-54) interacts with substrate. NADP(+) is bound by residues 84–86 and 105–108; these read RKT and LSRS. 3 residues coordinate substrate: Ile-160, Tyr-166, and Thr-184. Position 161-168 (161-168) interacts with NADP(+); it reads GGGTIYKQ. The interval 243–527 is thymidylate synthase; the sequence is EEQYLNLVGR…YPVISMEMAV (285 aa). Arg-263 is a dUMP binding site. Cys-409 is an active-site residue. DUMP contacts are provided by residues His-410, 428-432, Asn-440, and 470-472; these read QRSCD and HVY.

It in the N-terminal section; belongs to the dihydrofolate reductase family. In the C-terminal section; belongs to the thymidylate synthase family. Homodimer.

It catalyses the reaction dUMP + (6R)-5,10-methylene-5,6,7,8-tetrahydrofolate = 7,8-dihydrofolate + dTMP. It carries out the reaction (6S)-5,6,7,8-tetrahydrofolate + NADP(+) = 7,8-dihydrofolate + NADPH + H(+). The protein operates within pyrimidine metabolism; dTTP biosynthesis. It functions in the pathway cofactor biosynthesis; tetrahydrofolate biosynthesis; 5,6,7,8-tetrahydrofolate from 7,8-dihydrofolate: step 1/1. In terms of biological role, bifunctional enzyme. Involved in de novo dTMP biosynthesis. Key enzyme in folate metabolism. Catalyzes an essential reaction for de novo glycine and purine synthesis, DNA precursor synthesis, and for the conversion of dUMP to dTMP. The sequence is that of Bifunctional dihydrofolate reductase-thymidylate synthase from Trypanosoma brucei brucei.